A 292-amino-acid chain; its full sequence is MPQHDQLHRYLFENFAVRGELVTVSETLQQILDNHNYPQPVKTVLAELLVATSLLTATLKFAGDITVQLQGDGPLSLAVINGNNQQQMRGVARVQGDIPDNADLKTLVGNGYLVITITPEEGERYQGVVGLEGDTLAACLEDYFLRSEQLPTRLFIRTGDVDGKPAAGGMLLQVMPAQNAQAEDFDHLAMLTETIKSEELLTLPANDVLWRLYHEEEVTLYDPQNVEFKCTCSRERCAGALKTLPDEEVDSILAEEGEIDMHCDYCGNHYLFNAMDIAEIRNNASPADPQVH.

Cystine bridges form between C230-C232 and C263-C266.

Belongs to the HSP33 family. Post-translationally, under oxidizing conditions two disulfide bonds are formed involving the reactive cysteines. Under reducing conditions zinc is bound to the reactive cysteines and the protein is inactive.

Its subcellular location is the cytoplasm. Its function is as follows. Redox regulated molecular chaperone. Protects both thermally unfolding and oxidatively damaged proteins from irreversible aggregation. Plays an important role in the bacterial defense system toward oxidative stress. This is 33 kDa chaperonin from Salmonella typhimurium (strain LT2 / SGSC1412 / ATCC 700720).